The following is a 470-amino-acid chain: MNPNQKIITIGSICMAIGIISLILQMGNIISIWVSHSIQTGSQNHTGICNQRIITYENSTWVNQTYVNINNTNVVAGKDTTSVTLAGNSSLCPIRGWAIYSKDNSIRIGSKGDVFVIREPFISCSHLECRTFFLTQGALLNDKHSNGTVKDRSPYRALMSCPIGEAPSPYNSRFESVAWSASACHDGMGWLTIGISGPDDGAVAVLKYNGIITETIKSWRKRILRTQESECVCVNGSCFTIMTDGPSNGPASYRIFKIEKGKITKSIELDAPNSHYEECSCYPDTGTVMCVCRDNWHGSNRPWVSFNQNLDYQIGYICSGVFGDNPRPKDGKGSCDPVTVDGADGVKGFSYRYGNGVWIGRTKSNSSRKGFEMIWDPNGWTDTDSNFLVKQDVVAMTDWSGYSGSFVQHPELTGLDCMRPCFWVELIRGRPREKTTIWTSGSSISFCGVNSDTANWSWPDGAELPFTIDK.

Residues 1-6 (MNPNQK) are Intravirion-facing. A helical transmembrane segment spans residues 7–27 (IITIGSICMAIGIISLILQMG). The interval 11–33 (GSICMAIGIISLILQMGNIISIW) is involved in apical transport and lipid raft association. The Virion surface portion of the chain corresponds to 28–470 (NIISIWVSHS…GAELPFTIDK (443 aa)). The hypervariable stalk region stretch occupies residues 36–90 (HSIQTGSQNHTGICNQRIITYENSTWVNQTYVNINNTNVVAGKDTTSVTLAGNSS). N44, N58, N63, N70, and N88 each carry an N-linked (GlcNAc...) asparagine; by host glycan. The head of neuraminidase stretch occupies residues 91-470 (LCPIRGWAIY…GAELPFTIDK (380 aa)). 8 disulfides stabilise this stretch: C92/C417, C124/C129, C184/C231, C233/C238, C279/C292, C281/C290, C318/C335, and C421/C447. A substrate-binding site is contributed by R118. Residue N146 is glycosylated (N-linked (GlcNAc...) asparagine; by host). D151 serves as the catalytic Proton donor/acceptor. R152 contributes to the substrate binding site. N235 is a glycosylation site (N-linked (GlcNAc...) asparagine; by host). 277–278 (EE) contacts substrate. A substrate-binding site is contributed by R293. Ca(2+) contacts are provided by D294, G298, and D324. The N-linked (GlcNAc...) asparagine; by host glycan is linked to N365. A substrate-binding site is contributed by R368. The active-site Nucleophile is Y402. An N-linked (GlcNAc...) asparagine; by host glycan is attached at N455.

Belongs to the glycosyl hydrolase 34 family. Homotetramer. Ca(2+) is required as a cofactor. In terms of processing, N-glycosylated.

It localises to the virion membrane. The protein resides in the host apical cell membrane. It catalyses the reaction Hydrolysis of alpha-(2-&gt;3)-, alpha-(2-&gt;6)-, alpha-(2-&gt;8)- glycosidic linkages of terminal sialic acid residues in oligosaccharides, glycoproteins, glycolipids, colominic acid and synthetic substrates.. Inhibited by the neuraminidase inhibitors zanamivir (Relenza) and oseltamivir (Tamiflu). These drugs interfere with the release of progeny virus from infected cells and are effective against all influenza strains. Resistance to neuraminidase inhibitors is quite rare. Catalyzes the removal of terminal sialic acid residues from viral and cellular glycoconjugates. Cleaves off the terminal sialic acids on the glycosylated HA during virus budding to facilitate virus release. Additionally helps virus spread through the circulation by further removing sialic acids from the cell surface. These cleavages prevent self-aggregation and ensure the efficient spread of the progeny virus from cell to cell. Otherwise, infection would be limited to one round of replication. Described as a receptor-destroying enzyme because it cleaves a terminal sialic acid from the cellular receptors. May facilitate viral invasion of the upper airways by cleaving the sialic acid moieties on the mucin of the airway epithelial cells. Likely to plays a role in the budding process through its association with lipid rafts during intracellular transport. May additionally display a raft-association independent effect on budding. Plays a role in the determination of host range restriction on replication and virulence. Sialidase activity in late endosome/lysosome traffic seems to enhance virus replication. The polypeptide is Neuraminidase (Aves (Human)).